A 1210-amino-acid polypeptide reads, in one-letter code: AF4/FMR2 family member 1 (1210 aa).

Disordered regions lie at residues 1 to 45, 73 to 314, 366 to 957, and 1098 to 1119; these read MAAQ…GEPY, TKSH…KPLP, SWPP…KPQV, and TGTPSPLSPMPSPASSVGSQSS. Composition is skewed to basic and acidic residues over residues 9 to 35 and 78 to 87; these read NDDRNLLRIREKERRNQEAHQEKEAFP and HRLDASENRL. Phosphoserine is present on residues Ser199, Ser206, and Ser212. Residues 215 to 238 are compositionally biased toward polar residues; sequence HSNQQTLPRTQGSSKVHGSSNNSK. Position 220 is a phosphothreonine (Thr220). Basic and acidic residues predominate over residues 245 to 259; sequence SPKDLAVKVHDKETP. Over residues 267–279 the composition is skewed to pro residues; sequence AQPPSQTFPPPSL. The segment covering 394–419 has biased composition (polar residues); it reads HVSSVTQNQKQYDTSSKTHSNSQQGT. Residues 423–439 are compositionally biased toward acidic residues; that stretch reads LEDDLQLSDSEDSDSEQ. Residues 442-453 show a composition bias toward pro residues; it reads EKPPSSSAPPSA. Low complexity predominate over residues 454 to 472; it reads PQSLPEPVASAHSSSAESE. The span at 473–497 shows a compositional bias: acidic residues; the sequence is STSDSDSSSDSESESSSSDSEENEP. A compositionally biased stretch (basic and acidic residues) spans 536-546; that stretch reads EPPRRHPESKG. Positions 586–602 are enriched in polar residues; it reads QKSPAQQEPPQRQTVGT. Ser588 carries the post-translational modification Phosphoserine. Lys681 is modified (N6-acetyllysine). Basic and acidic residues predominate over residues 688–699; it reads PAKDNVEDRTPE. Thr697 carries the post-translational modification Phosphothreonine. Residues 707 to 724 are compositionally biased toward polar residues; the sequence is TESQGPPHSGSGSRTSGC. Residues 732 to 747 show a composition bias toward basic and acidic residues; it reads EDSRKDRLPLPLRDTK. Ser750 bears the Phosphoserine mark. Thr755 bears the Phosphothreonine mark. Residues 816–834 are compositionally biased toward basic and acidic residues; that stretch reads GEAERDCDNKKIRLEKEIK. Low complexity predominate over residues 871 to 880; it reads SSSSQKPAKP. Residues 906 to 932 are compositionally biased toward basic and acidic residues; that stretch reads NHKDSSIPKQRRVEGKGSRSSSEHKGS. A compositionally biased stretch (low complexity) spans 1110-1119; it reads PASSVGSQSS.

This sequence belongs to the AF4 family. As to quaternary structure, component of the super elongation complex (SEC), at least composed of EAF1, EAF2, CDK9, MLLT3/AF9, AFF (AFF1 or AFF4), the P-TEFb complex and ELL (ELL, ELL2 or ELL3).

Its subcellular location is the nucleus. The protein is AF4/FMR2 family member 1 (AFF1) of Homo sapiens (Human).